A 356-amino-acid chain; its full sequence is tRNA N6-adenosine threonylcarbamoyltransferase (356 aa).

Residues His-124, His-128, and Tyr-145 each coordinate a divalent metal cation. Residues 145 to 149, Asp-177, Gly-192, Glu-196, and Asn-287 contribute to the substrate site; that span reads YVSGG. Asp-315 lines the a divalent metal cation pocket.

The protein belongs to the KAE1 / TsaD family. Component of the EKC/KEOPS complex composed of at least BUD32, CGI121, GON7, KAE1 and PCC1; the whole complex dimerizes. The cofactor is a divalent metal cation.

The protein resides in the cytoplasm. The protein localises to the nucleus. It carries out the reaction L-threonylcarbamoyladenylate + adenosine(37) in tRNA = N(6)-L-threonylcarbamoyladenosine(37) in tRNA + AMP + H(+). Component of the EKC/KEOPS complex that is required for the formation of a threonylcarbamoyl group on adenosine at position 37 (t(6)A37) in tRNAs that read codons beginning with adenine. The complex is probably involved in the transfer of the threonylcarbamoyl moiety of threonylcarbamoyl-AMP (TC-AMP) to the N6 group of A37. KAE1 likely plays a direct catalytic role in this reaction, but requires other protein(s) of the complex to fulfill this activity. The EKC/KEOPS complex also promotes both telomere uncapping and telomere elongation. The complex is required for efficient recruitment of transcriptional coactivators. This chain is tRNA N6-adenosine threonylcarbamoyltransferase, found in Yarrowia lipolytica (strain CLIB 122 / E 150) (Yeast).